The chain runs to 135 residues: Large ribosomal subunit protein uL16c (135 aa).

It belongs to the universal ribosomal protein uL16 family. As to quaternary structure, part of the 50S ribosomal subunit.

It is found in the plastid. The protein localises to the chloroplast. The chain is Large ribosomal subunit protein uL16c from Oenothera argillicola (Appalachian evening primrose).